The chain runs to 256 residues: Thiazole synthase (256 aa).

Lys-95 functions as the Schiff-base intermediate with DXP in the catalytic mechanism. 1-deoxy-D-xylulose 5-phosphate-binding positions include Gly-156, 182 to 183, and 204 to 205; these read AG and NT.

This sequence belongs to the ThiG family. In terms of assembly, homotetramer. Forms heterodimers with either ThiH or ThiS.

The protein resides in the cytoplasm. It carries out the reaction [ThiS sulfur-carrier protein]-C-terminal-Gly-aminoethanethioate + 2-iminoacetate + 1-deoxy-D-xylulose 5-phosphate = [ThiS sulfur-carrier protein]-C-terminal Gly-Gly + 2-[(2R,5Z)-2-carboxy-4-methylthiazol-5(2H)-ylidene]ethyl phosphate + 2 H2O + H(+). It participates in cofactor biosynthesis; thiamine diphosphate biosynthesis. In terms of biological role, catalyzes the rearrangement of 1-deoxy-D-xylulose 5-phosphate (DXP) to produce the thiazole phosphate moiety of thiamine. Sulfur is provided by the thiocarboxylate moiety of the carrier protein ThiS. In vitro, sulfur can be provided by H(2)S. In Escherichia coli (strain K12 / MC4100 / BW2952), this protein is Thiazole synthase.